A 495-amino-acid chain; its full sequence is Protein YhjJ (495 aa).

The signal sequence occupies residues 1–24 (MQGTKIRLLAGSLLMLASAGYVQA).

This sequence belongs to the peptidase M16 family.

It is found in the periplasm. The chain is Protein YhjJ (yhjJ) from Salmonella typhimurium (strain LT2 / SGSC1412 / ATCC 700720).